The following is a 180-amino-acid chain: Virion protein US10 homolog (180 aa).

Belongs to the herpesviridae US10 family. In terms of processing, phosphorylated.

It localises to the virion tegument. The protein localises to the host nucleus matrix. This Varicella-zoster virus (strain Dumas) (HHV-3) protein is Virion protein US10 homolog (64).